Reading from the N-terminus, the 317-residue chain is Ret finger protein-like 3 (317 aa).

An RING-type zinc finger spans residues 40–82 (CPVCSDYLEKPMSLECGCTVCLKCINSLQKEPHGEDLLCCCCS). Residues 107 to 301 (EPKLKKILQM…DQGVLSICPL (195 aa)) form the B30.2/SPRY domain.

As to expression, expressed during neurogenesis in differentiating human embryonic stem cells and in the developing human neocortex.

The protein localises to the cytoplasm. The protein resides in the nucleus. Functionally, (Microbial infection) Stimulates the activity of Human Immunodeficiency Virus 1/HIV-1 pre-integration complex. The protein is Ret finger protein-like 3 (RFPL3) of Homo sapiens (Human).